The primary structure comprises 2488 residues: PKS-NRPS hybrid synthetase swnK (2488 aa).

An adenylation (A) domain region spans residues 33–422 (FEQVADRFPD…GRIDGVVKIR (390 aa)). The Carrier 1 domain occupies 523 to 598 (QPTSELEQRI…ALAAYLAGTG (76 aa)). Serine 558 bears the O-(pantetheine 4'-phosphoryl)serine mark. Residues 616–1039 (HEDIAIVSMA…GTNAHVIVEE (424 aa)) form the Ketosynthase family 3 (KS3) domain. Active-site for beta-ketoacyl synthase activity residues include cysteine 785, histidine 920, and histidine 960. Residues 1149 to 1471 (LFTGQGSQLP…SLSELHVRHV (323 aa)) are malonyl-CoA:ACP transacylase (MAT) domain. The ketoreductase (KR) domain stretch occupies residues 1723 to 1901 (GAVLVTGGLG…ASSVAYGTWA (179 aa)). In terms of domain architecture, Carrier 2 spans 2002–2077 (SIVLHMVQAT…SLSEFLLCRL (76 aa)). Serine 2037 carries the O-(pantetheine 4'-phosphoryl)serine modification. The segment at 2084 to 2103 (STSSPSDTDGATPSTPTSAA) is disordered. The thioester reductase (TE) domain stretch occupies residues 2136–2364 (VTGATGFVGT…VLPVDYLCGT (229 aa)).

It in the N-terminal section; belongs to the NRP synthetase family.

The enzyme catalyses L-pipecolate + malonyl-CoA + 2 NADPH + 4 H(+) = (8aS)-octahydroindolizin-1-one + CO2 + 2 NADP(+) + CoA + 2 H2O. The catalysed reaction is L-pipecolate + malonyl-CoA + 3 NADPH + 5 H(+) = (1R,8aS)-octahydroindolizin-1-ol + CO2 + 3 NADP(+) + CoA + 2 H2O. It carries out the reaction L-pipecolate + malonyl-CoA + 3 NADPH + 5 H(+) = (1S,8aS)-octahydroindolizin-1-ol + CO2 + 3 NADP(+) + CoA + 2 H2O. It functions in the pathway mycotoxin biosynthesis. Functionally, PKS-NRPS hybrid synthetase; part of the gene cluster that mediates the biosynthesis of swainsonine (SW), a cytotoxic fungal alkaloid and a potential cancer therapy drug. Swainsonine production occurs via a multibranched pathway and is dispensable for fungal colonization of plants and infection of insect hosts. The first step of swainsonine biosynthesis is the production of the precursor pipecolic acid (PA) via conversion of L-lysine (Lys) to 1-piperideine-6-carboxylate (P6C) by the aminotransferase swnA, the latter being further reduced to PA by the reductase swnR. PA can be converted from lysine by both the SW biosynthetic cluster and the unclustered genes such as lysine cyclodeaminase. The PKS-NRPS hybrid synthetase swnK uptakes and condensates PA and malonyl-CoA with and without skipping of the ketoreductase (KR) domain in order to produce 3 intermediates, 1-oxoindolizidine, (1S)-1-hydroxyindolizin, and (1R)-1-hydroxyindolizine; with the transisomer (1S)-1-hydroxyindolizin being predominant. The terminal thioester reductase (TE) domain of swnK is involved in reduction of the thioester bond to release the intermediate aldehydes. The oxidoreductase swnN could contribute to the reduction of 1-oxoindolizidine to (1S)-1-hydroxyindolizin and (1R)-1-hydroxyindolizine, contributing to the major route of SW production. The dioxygenase swnH2 would be responsible for the oxidization of (1R)-1-hydroxyindolizine into (1R,2S)-1,2-dihydroxyindolizine and of (1S)-1-hydroxyindolizin to yield both (1R,2S)-1,2-dihydroxyindolizine and (1S,2S)-1,2-dihydroxyindolizine. The dioxygenase swnH1 then performs the conversion of the 1,2-dihydroxyindolizine epimers to SW. In Metarhizium robertsii (strain ARSEF 23 / ATCC MYA-3075) (Metarhizium anisopliae (strain ARSEF 23)), this protein is PKS-NRPS hybrid synthetase swnK.